A 111-amino-acid polypeptide reads, in one-letter code: Cell cycle protein GpsB (111 aa).

Residues 34-72 (LDMIIKDYEVFHKELEQLQQQNARLKRELEEQKLAAAQA) adopt a coiled-coil conformation.

Belongs to the GpsB family. In terms of assembly, forms polymers through the coiled coil domains. Interacts with PBP1, MreC and EzrA.

The protein resides in the cytoplasm. Its function is as follows. Divisome component that associates with the complex late in its assembly, after the Z-ring is formed, and is dependent on DivIC and PBP2B for its recruitment to the divisome. Together with EzrA, is a key component of the system that regulates PBP1 localization during cell cycle progression. Its main role could be the removal of PBP1 from the cell pole after pole maturation is completed. Also contributes to the recruitment of PBP1 to the division complex. Not essential for septum formation. This is Cell cycle protein GpsB from Bacillus cytotoxicus (strain DSM 22905 / CIP 110041 / 391-98 / NVH 391-98).